Consider the following 228-residue polypeptide: Sodium channel regulatory subunit beta-4 (228 aa).

The N-terminal stretch at 1 to 30 (MSRAGNRGNTQARWLGTGLLGLFLLPMYLS) is a signal peptide. The Ig-like C2-type domain occupies 31 to 148 (LEVSVGKATT…KDLNNSATIF (118 aa)). Topologically, residues 31–161 (LEVSVGKATT…VDKLEKVDNT (131 aa)) are extracellular. Residues N45, N71, N113, and N142 are each glycosylated (N-linked (GlcNAc...) asparagine). A disulfide bond links C53 and C131. The chain crosses the membrane as a helical span at residues 162–182 (VTLIILAVVGGVIGLLVCILL). Residues 183–228 (LKKLITFILKKTREKKKECLVSSSGNDNTENGLPGSKAEEKPPTKV) are Cytoplasmic-facing. The interval 199-228 (KECLVSSSGNDNTENGLPGSKAEEKPPTKV) is disordered. The span at 203-213 (VSSSGNDNTEN) shows a compositional bias: polar residues. A compositionally biased stretch (basic and acidic residues) spans 219–228 (KAEEKPPTKV).

This sequence belongs to the sodium channel auxiliary subunit SCN4B (TC 8.A.17) family. A voltage-gated sodium (Nav) channel consists of an ion-conducting pore-forming alpha subunit functional on its own that is regulated by one or more beta subunits. The beta subunit SCN4B is disulfide-linked to the pore-forming alpha subunit. Interacts with SCN1A; regulatory subunit of SCN1A/Nav1.1. Interacts with SCN2A; regulatory subunit of SCN2A/Nav1.2. Contains an interchain disulfide bond with SCN2A.

It localises to the cell membrane. Regulatory subunit of multiple voltage-gated sodium (Nav) channels directly mediating the depolarization of excitable membranes. Navs, also called VGSCs (voltage-gated sodium channels) or VDSCs (voltage-dependent sodium channels), operate by switching between closed and open conformations depending on the voltage difference across the membrane. In the open conformation they allow Na(+) ions to selectively pass through the pore, along their electrochemical gradient. The influx of Na+ ions provokes membrane depolarization, initiating the propagation of electrical signals throughout cells and tissues. The accessory beta subunits participate in localization and functional modulation of the Nav channels. Modulates the activity of SCN1A/Nav1.1. Modulates the activity of SCN2A/Nav1.2. This chain is Sodium channel regulatory subunit beta-4, found in Mus musculus (Mouse).